Here is a 244-residue protein sequence, read N- to C-terminus: 2,5-diamino-6-ribosylamino-4(3H)-pyrimidinone 5'-phosphate reductase (244 aa).

NADP(+) is bound by residues Thr79, Asp83, Val159, and 182 to 186; that span reads GANVI.

It belongs to the HTP reductase family. As to quaternary structure, homodimer.

It carries out the reaction 2,5-diamino-6-(1-D-ribitylamino)pyrimidin-4(3H)-one 5'-phosphate + NADP(+) = 2,5-diamino-6-(1-D-ribosylamino)pyrimidin-4(3H)-one 5'-phosphate + NADPH + H(+). The catalysed reaction is 2,5-diamino-6-(1-D-ribitylamino)pyrimidin-4(3H)-one 5'-phosphate + NAD(+) = 2,5-diamino-6-(1-D-ribosylamino)pyrimidin-4(3H)-one 5'-phosphate + NADH + H(+). The protein operates within cofactor biosynthesis; riboflavin biosynthesis. Functionally, catalyzes an early step in riboflavin biosynthesis, the NADPH-dependent reduction of the ribose side chain of 2,5-diamino-6-ribosylamino-4(3H)-pyrimidinone 5'-phosphate, yielding 2,5-diamino-6-ribitylamino-4(3H)-pyrimidinone 5'-phosphate. This Saccharomyces cerevisiae (strain ATCC 204508 / S288c) (Baker's yeast) protein is 2,5-diamino-6-ribosylamino-4(3H)-pyrimidinone 5'-phosphate reductase (RIB7).